A 506-amino-acid chain; its full sequence is Probable Xaa-Pro aminopeptidase BDCG_04966 (506 aa).

Asp-285, Asp-296, Glu-433, and Glu-471 together coordinate Mn(2+).

It belongs to the peptidase M24B family. Requires Mn(2+) as cofactor.

The enzyme catalyses Release of any N-terminal amino acid, including proline, that is linked to proline, even from a dipeptide or tripeptide.. Functionally, catalyzes the removal of a penultimate prolyl residue from the N-termini of peptides. The protein is Probable Xaa-Pro aminopeptidase BDCG_04966 of Ajellomyces dermatitidis (strain ER-3 / ATCC MYA-2586) (Blastomyces dermatitidis).